The following is a 606-amino-acid chain: Kelch-like protein 41 (606 aa).

Ser-3 bears the Phosphoserine mark. Residues Ile-33–Asp-100 form the BTB domain. The BACK domain maps to Cys-135–Glu-237. Kelch repeat units follow at residues Gln-346 to Asp-398, Lys-399 to Gly-447, Met-448 to Gly-495, Ile-497 to Gly-542, and Leu-544 to Asn-599.

As to quaternary structure, interacts with NRAP. Part of a complex that contains CUL3, RBX1 and KLHL41. Interacts with LASP1. Post-translationally, ubiquitinated by E3 ubiquitin ligase complex formed by CUL3 and RBX1 and probably targeted for proteasome-independent degradation. Quinone-induced oxidative stress increases its ubiquitination. Skeletal muscle. Localized between laterally fusing myofibrils in skeletal muscle (at protein level). Expressed at a lower level in the heart compared to skeletal muscle.

The protein resides in the cytoplasm. It is found in the cytoskeleton. Its subcellular location is the cell projection. The protein localises to the pseudopodium. It localises to the ruffle. The protein resides in the myofibril. It is found in the sarcomere. Its subcellular location is the m line. The protein localises to the sarcoplasmic reticulum membrane. It localises to the endoplasmic reticulum membrane. Its function is as follows. Involved in skeletal muscle development and differentiation. Regulates proliferation and differentiation of myoblasts and plays a role in myofibril assembly by promoting lateral fusion of adjacent thin fibrils into mature, wide myofibrils. Required for pseudopod elongation in transformed cells. The sequence is that of Kelch-like protein 41 (Klhl41) from Mus musculus (Mouse).